Reading from the N-terminus, the 466-residue chain is MSIASVASVFKGEHAVGSTVTVRGWVRTRRDSKAGISFLAVYDGSCFNPIQGVVPSSLENYDNEVLKLTAGCSVIVTGEIVESPGAGQAYELQVTHVEVTGWVEDPDTYPMAAKRHSIEHLRELAHLRPRTNIIGAVARVRNCLSQAIHRFYHENGFVWVSTPLITASDCEGAGEMFRVSTLDMENLPRTSDGKVDYDKDFFGKEAFLTVSGQLNGETYACALSKIYTFGPTFRAENSNTSRHLAEFWMVEPEVAFATLSDIASLAEGMLKYAFDAVLAERMDDLQFFAQHVDKTVIERLQSFVSSDFAQVDYTDAVEILQKCGREFEFPVSWGIDLSSEHERYLAEEHFKAPVVVKNYPKDIKAFYMRLNEDGKTVAAMDVLAPGIGEIIGGSQREERLDVLDMRLEEMDLNKEDYWWYRDLRRYGTVPHAGFGLGFERLVSYVTGVSNIRDVIPFPRAPRTANF.

The protein belongs to the class-II aminoacyl-tRNA synthetase family. Homodimer.

The protein resides in the cytoplasm. The enzyme catalyses tRNA(Asn) + L-asparagine + ATP = L-asparaginyl-tRNA(Asn) + AMP + diphosphate + H(+). In Shewanella sp. (strain MR-7), this protein is Asparagine--tRNA ligase.